Consider the following 236-residue polypeptide: Probable transcriptional regulatory protein UUR10_0292 (236 aa).

Belongs to the TACO1 family.

It is found in the cytoplasm. The protein is Probable transcriptional regulatory protein UUR10_0292 of Ureaplasma urealyticum serovar 10 (strain ATCC 33699 / Western).